The chain runs to 441 residues: Mitochondrial inner membrane protein OXA1L (441 aa).

The Mitochondrial intermembrane segment spans residues 1-113 (MALALMCGRR…QAAAEQSFAE (113 aa)). A helical membrane pass occupies residues 114–134 (LGLGSYTPVGLIQNLLEFMHV). The Mitochondrial matrix segment spans residues 135-139 (NLGLP). The chain crosses the membrane as a helical span at residues 140-160 (WWGAIAACTVLARCLVFPLIV). Over 161 to 212 (KGQREAAKIHNHLPEIQKFSARIREAKLTGNHTEFYRASSEMTFYQKKHDIK) the chain is Mitochondrial intermembrane. The helical transmembrane segment at 213–233 (LFRPLILPLTQAPIFISFFIA) threads the bilayer. The Mitochondrial matrix segment spans residues 234-260 (LREMANLPVPSLQTGGLWWFQDLTLSD). Residues 261-281 (PIYVLPLVVTATMWGVLELGA) traverse the membrane as a helical segment. Residues 282–298 (ETGMQSSDLQWMRNFIR) are Mitochondrial intermembrane-facing. Residues 299 to 319 (LMPLAVLPITIHFPTAVFMYW) traverse the membrane as a helical segment. Residues 320 to 441 (LSSNMFSLGQ…SKQPWRDTLG (122 aa)) are Mitochondrial matrix-facing. S364 carries the phosphoserine modification. T400 bears the Phosphothreonine mark. Positions 405 to 441 (PLLQHGKNDPPNTPNSSSSSSSSNKAKSKQPWRDTLG) are disordered. Residues 418–429 (PNSSSSSSSSNK) are compositionally biased toward low complexity.

Belongs to the OXA1/ALB3/YidC family. Monomer; predominantly monomeric at low salt concentrations. Homooligomer; predominantly homooligomeric at high salt concentrations. Associates with the mitochondrial ribosome. Associates preferentially as a dimer with the large ribosomal subunit 39S of the mitochondrial ribosome. Interacts with OXA1L; promoting cotranslational quality control in mitochondria.

It is found in the mitochondrion inner membrane. Functionally, mitochondrial membrane insertase that mediates the cotranslational insertion of integral membrane proteins into the mitochondrial inner membrane. Essential for the activity and assembly of cytochrome oxidase. Required for the correct biogenesis of ATP synthase and complex I in mitochondria. The polypeptide is Mitochondrial inner membrane protein OXA1L (OXA1L) (Bos taurus (Bovine)).